The chain runs to 399 residues: Phosphoglycerate kinase (399 aa).

Substrate contacts are provided by residues 22–24, R37, 60–63, R119, and R152; these read DLN and HFGR. ATP is bound by residues K202, E324, and 354 to 357; that span reads GGDT.

It belongs to the phosphoglycerate kinase family. In terms of assembly, monomer.

It is found in the cytoplasm. The catalysed reaction is (2R)-3-phosphoglycerate + ATP = (2R)-3-phospho-glyceroyl phosphate + ADP. It participates in carbohydrate degradation; glycolysis; pyruvate from D-glyceraldehyde 3-phosphate: step 2/5. The protein is Phosphoglycerate kinase of Sinorhizobium medicae (strain WSM419) (Ensifer medicae).